An 81-amino-acid polypeptide reads, in one-letter code: High-potential iron-sulfur protein (81 aa).

[4Fe-4S] cluster is bound by residues Cys43, Cys46, Cys59, and Cys73.

Belongs to the high-potential iron-sulfur protein (HiPIP) family. Homodimer.

It localises to the periplasm. Specific class of high-redox-potential 4Fe-4S ferredoxins. Functions in anaerobic electron transport in most purple and in some other photosynthetic bacteria and in at least one genus (Paracoccus) of halophilic, denitrifying bacteria. In Halochromatium salexigens (Chromatium salexigens), this protein is High-potential iron-sulfur protein.